Here is a 198-residue protein sequence, read N- to C-terminus: MHYPEPISKLIDSFMKLPGIGPKTAQRLAFHTLDMKEDDVVQFAKALVDVKRELTYCSVCGHITENDPCYICEDKQRDRSVICVVEDDKDVIAMEKMREYKGLYHVLHGSISPMDGIGPEDINIPTLIDRLKDEEVKELILAMNPNLEGESTAMYISRLVKPIGIKVTRLAQGLSVGGDLEYADEVTLSKAIAGRTEM.

The segment at cysteine 57 to cysteine 72 adopts a C4-type zinc-finger fold. Residues serine 80 to serine 175 form the Toprim domain.

Belongs to the RecR family.

In terms of biological role, may play a role in DNA repair. It seems to be involved in an RecBC-independent recombinational process of DNA repair. It may act with RecF and RecO. This Staphylococcus haemolyticus (strain JCSC1435) protein is Recombination protein RecR.